The primary structure comprises 330 residues: Sulfate/thiosulfate import ATP-binding protein CysA (330 aa).

Positions 3–237 (IEIRNINKQF…PASEFVYHFL (235 aa)) constitute an ABC transporter domain. Position 35-42 (35-42 (GPSGCGKT)) interacts with ATP.

The protein belongs to the ABC transporter superfamily. Sulfate/tungstate importer (TC 3.A.1.6) family. The complex is composed of two ATP-binding proteins (CysA), two transmembrane proteins (CysT and CysW) and a solute-binding protein (CysP).

The protein resides in the cell inner membrane. The enzyme catalyses sulfate(out) + ATP + H2O = sulfate(in) + ADP + phosphate + H(+). The catalysed reaction is thiosulfate(out) + ATP + H2O = thiosulfate(in) + ADP + phosphate + H(+). Functionally, part of the ABC transporter complex CysAWTP involved in sulfate/thiosulfate import. Responsible for energy coupling to the transport system. The sequence is that of Sulfate/thiosulfate import ATP-binding protein CysA from Pectobacterium atrosepticum (strain SCRI 1043 / ATCC BAA-672) (Erwinia carotovora subsp. atroseptica).